The following is a 408-amino-acid chain: Protein BTN1 (408 aa).

A signal peptide spans 1–30 (MSDKSHQIYCYFWLFGLINNVLYVVILSAA). Helical transmembrane passes span 42-62 (LVLL…PFFI), 80-100 (LGMF…ISFA), 128-148 (SGTG…TSIF), 150-170 (VPVK…LFYF), 238-258 (TVYL…LFPI), 323-343 (WFYV…EGFL), and 369-389 (GAVS…GLGL).

The protein belongs to the battenin family.

Its subcellular location is the vacuole membrane. In terms of biological role, plays a role in vacuolar arginine transport. Involved in pH homeostasis. May be involved in ion homeostasis together with IST2. Not necessary for mitochondrial function or ATP synthase degradation. This is Protein BTN1 (YHC3) from Saccharomyces cerevisiae (strain ATCC 204508 / S288c) (Baker's yeast).